The chain runs to 247 residues: Probable transcriptional regulatory protein Tola_2714 (247 aa).

The tract at residues 1–21 is disordered; the sequence is MAGHSKWANIKHRKAAQDAKR.

Belongs to the TACO1 family.

It localises to the cytoplasm. This is Probable transcriptional regulatory protein Tola_2714 from Tolumonas auensis (strain DSM 9187 / NBRC 110442 / TA 4).